We begin with the raw amino-acid sequence, 398 residues long: UPF0261 protein RA0729 (398 aa).

The protein belongs to the UPF0261 family.

In Rhizobium meliloti (strain 1021) (Ensifer meliloti), this protein is UPF0261 protein RA0729.